We begin with the raw amino-acid sequence, 448 residues long: ATP-dependent protease ATPase subunit HslU (448 aa).

Residues Ile-18, 60–65 (GVGKTE), Asp-261, Glu-326, and Arg-398 contribute to the ATP site.

The protein belongs to the ClpX chaperone family. HslU subfamily. A double ring-shaped homohexamer of HslV is capped on each side by a ring-shaped HslU homohexamer. The assembly of the HslU/HslV complex is dependent on binding of ATP.

The protein localises to the cytoplasm. In terms of biological role, ATPase subunit of a proteasome-like degradation complex; this subunit has chaperone activity. The binding of ATP and its subsequent hydrolysis by HslU are essential for unfolding of protein substrates subsequently hydrolyzed by HslV. HslU recognizes the N-terminal part of its protein substrates and unfolds these before they are guided to HslV for hydrolysis. The chain is ATP-dependent protease ATPase subunit HslU from Paraburkholderia phytofirmans (strain DSM 17436 / LMG 22146 / PsJN) (Burkholderia phytofirmans).